The sequence spans 544 residues: Lysophosphatidylcholine acyltransferase 2 (544 aa).

Topologically, residues 1–57 (MSRCAQAAEVAATVPGAGVGNVGLRPPMVPRQASFFPPPVPNPFVQQTQIGSARRVQ) are cytoplasmic. The chain crosses the membrane as a helical; Signal-anchor for type II membrane protein span at residues 58–78 (IVLLGIILLPIRVLLVALILL). Topologically, residues 79-544 (LAWPFAAIST…EESTSDKKDD (466 aa)) are lumenal. Residues 146-151 (HSTFFD) carry the HXXXXD motif motif. Positions 220–223 (EGTC) match the EGTC motif motif. EF-hand domains follow at residues 391-426 (PVSDVLRQLFALFDRNHDGSIDFREYVIGLAVLCNP) and 428-463 (NTEEIIQVAFKLFDVDEDGYITEEEFSTILQASLGV). 10 residues coordinate Ca(2+): D404, N406, D408, S410, E415, D441, D443, D445, Y447, and E452. Residues 518-529 (VQTTPSTASNKV) show a composition bias toward polar residues. The disordered stretch occupies residues 518–544 (VQTTPSTASNKVSPEKHEESTSDKKDD). The span at 530 to 544 (SPEKHEESTSDKKDD) shows a compositional bias: basic and acidic residues.

The protein belongs to the 1-acyl-sn-glycerol-3-phosphate acyltransferase family.

It is found in the endoplasmic reticulum membrane. It localises to the golgi apparatus membrane. The protein localises to the cell membrane. Its subcellular location is the lipid droplet. The catalysed reaction is a 1-acyl-sn-glycero-3-phosphocholine + an acyl-CoA = a 1,2-diacyl-sn-glycero-3-phosphocholine + CoA. It carries out the reaction a 1-O-alkyl-sn-glycero-3-phosphocholine + acetyl-CoA = a 1-O-alkyl-2-acetyl-sn-glycero-3-phosphocholine + CoA. The enzyme catalyses a 1-acyl-sn-glycero-3-phosphate + an acyl-CoA = a 1,2-diacyl-sn-glycero-3-phosphate + CoA. It catalyses the reaction a 1-O-(1Z-alkenyl)-sn-glycero-3-phosphocholine + an acyl-CoA = a 1-O-(1Z-alkenyl)-2-acyl-sn-glycero-3-phosphocholine + CoA. The catalysed reaction is 1-hexadecanoyl-sn-glycero-3-phosphate + (9Z)-octadecenoyl-CoA = 1-hexadecanoyl-2-(9Z-octadecenoyl)-sn-glycero-3-phosphate + CoA. It carries out the reaction 1-(9Z-octadecenoyl)-sn-glycero-3-phosphate + (9Z)-octadecenoyl-CoA = 1,2-di-(9Z-octadecenoyl)-sn-glycero-3-phosphate + CoA. The enzyme catalyses 1-(9Z-octadecenoyl)-sn-glycero-3-phosphate + hexadecanoyl-CoA = 1-(9Z)-octadecenoyl-2-hexadecanoyl-sn-glycero-3-phosphate + CoA. It catalyses the reaction 1-heptadecanoyl-sn-glycero-3-phosphate + (9Z)-octadecenoyl-CoA = 1-heptadecanoyl-2-(9Z)-octadecenoyl-sn-glycero-3-phosphate + CoA. The catalysed reaction is 1-octadecanoyl-sn-glycero-3-phosphate + (9Z)-octadecenoyl-CoA = 1-octadecanoyl-2-(9Z-octadecenoyl)-sn-glycero-3-phosphate + CoA. It carries out the reaction heptadecanoyl-CoA + 1-(9Z-octadecenoyl)-sn-glycero-3-phosphate = 1-(9Z)-octadecenoyl-2-heptadecanoyl-sn-glycero-3-phosphate + CoA. The enzyme catalyses 1-(9Z-octadecenoyl)-sn-glycero-3-phosphate + (9Z,12Z)-octadecadienoyl-CoA = 1-(9Z)-octadecenoyl-2-(9Z,12Z)-octadecadienoyl-sn-glycero-3-phosphate + CoA. It catalyses the reaction 1-(9Z-octadecenoyl)-sn-glycero-3-phosphate + tetradecanoyl-CoA = 1-(9Z)-octadecenoyl-2-tetradecanoyl-sn-glycero-3-phosphate + CoA. The catalysed reaction is pentadecanoyl-CoA + 1-(9Z-octadecenoyl)-sn-glycero-3-phosphate = 1-(9Z)-octadecenoyl-2-pentadecanoyl-sn-glycero-3-phosphate + CoA. It carries out the reaction nonadecanoyl-CoA + 1-(9Z-octadecenoyl)-sn-glycero-3-phosphate = 1-(9Z)-octadecenoyl-2-nonadecanoyl-sn-glycero-3-phosphate + CoA. The enzyme catalyses 1-hexadecanoyl-sn-glycero-3-phosphocholine + (9Z)-octadecenoyl-CoA = 1-hexadecanoyl-2-(9Z-octadecenoyl)-sn-glycero-3-phosphocholine + CoA. It catalyses the reaction 1-O-hexadecyl-sn-glycero-3-phosphocholine + acetyl-CoA = 1-O-hexadecyl-2-acetyl-sn-glycero-3-phosphocholine + CoA. The catalysed reaction is 1-O-octadecyl-sn-glycero-3-phosphocholine + acetyl-CoA = 1-O-octadecyl-2-acetyl-sn-glycero-3-phosphocholine + CoA. It carries out the reaction 1-hexadecanoyl-sn-glycero-3-phosphocholine + acetyl-CoA = 1-hexadecanoyl-2-acetyl-sn-glycero-3-phosphocholine + CoA. The enzyme catalyses 1-octadecanoyl-sn-glycero-3-phosphocholine + acetyl-CoA = 1-octadecanoyl-2-acetyl-sn-glycero-3-phosphocholine + CoA. It catalyses the reaction a 1-O-(1Z-alkenyl)-sn-glycero-3-phosphocholine + acetyl-CoA = 1-O-(1Z)-alkenyl-2-acetyl-sn-glycero-3-phosphocholine + CoA. The catalysed reaction is 1-O-octadecyl-sn-glycero-3-phosphocholine + (5Z,8Z,11Z,14Z)-eicosatetraenoyl-CoA = 1-O-octadecyl-2-(5Z,8Z,11Z,14Z)-eicosatetraenoyl-sn-glycero-3-phosphocholine + CoA. It functions in the pathway lipid metabolism; phospholipid metabolism. Its function is as follows. Exhibits both acyltransferase and acetyltransferase activities. Catalyzes the conversion of lysophosphatidylcholine (1-acyl-sn-glycero-3-phosphocholine or LPC) into phosphatidylcholine (1,2-diacyl-sn-glycero-3-phosphocholine or PC). Catalyzes the conversion 1-acyl-sn-glycerol-3-phosphate (lysophosphatidic acid or LPA) into 1,2-diacyl-sn-glycerol-3-phosphate (phosphatidic acid or PA) by incorporating an acyl moiety at the sn-2 position of the glycerol backbone. Involved in platelet-activating factor (PAF) biosynthesis by catalyzing the conversion of the PAF precursor, 1-O-alkyl-sn-glycero-3-phosphocholine (lyso-PAF) into 1-O-alkyl-2-acetyl-sn-glycero-3-phosphocholine (PAF). Also converts lyso-PAF to 1-O-alkyl-2-acyl-sn-glycero-3-phosphocholine (PC), a major component of cell membranes and a PAF precursor. Under resting conditions, acyltransferase activity is preferred. Upon acute inflammatory stimulus, acetyltransferase activity is enhanced and PAF synthesis increases. Involved in the regulation of lipid droplet number and size. The polypeptide is Lysophosphatidylcholine acyltransferase 2 (LPCAT2) (Homo sapiens (Human)).